The chain runs to 450 residues: Cysteine protease ATG4C (450 aa).

Residue C112 is the Nucleophile of the active site. Catalysis depends on residues D336 and H338.

Belongs to the peptidase C54 family.

The protein localises to the cytoplasm. The catalysed reaction is [protein]-C-terminal L-amino acid-glycyl-phosphatidylethanolamide + H2O = [protein]-C-terminal L-amino acid-glycine + a 1,2-diacyl-sn-glycero-3-phosphoethanolamine. Cysteine protease that plays a key role in autophagy by mediating both proteolytic activation and delipidation of ATG8 family proteins. The protease activity is required for proteolytic activation of ATG8 family proteins: cleaves the C-terminal amino acid of ATG8 proteins to reveal a C-terminal glycine. Exposure of the glycine at the C-terminus is essential for ATG8 proteins conjugation to phosphatidylethanolamine (PE) and insertion to membranes, which is necessary for autophagy. In addition to the protease activity, also mediates delipidation of ATG8 family proteins. Catalyzes delipidation of PE-conjugated forms of ATG8 proteins during macroautophagy. The protein is Cysteine protease ATG4C of Xenopus laevis (African clawed frog).